The following is a 351-amino-acid chain: Nicotinate-nucleotide--dimethylbenzimidazole phosphoribosyltransferase (351 aa).

The Proton acceptor role is filled by E317.

It belongs to the CobT family.

The enzyme catalyses 5,6-dimethylbenzimidazole + nicotinate beta-D-ribonucleotide = alpha-ribazole 5'-phosphate + nicotinate + H(+). The protein operates within nucleoside biosynthesis; alpha-ribazole biosynthesis; alpha-ribazole from 5,6-dimethylbenzimidazole: step 1/2. Functionally, catalyzes the synthesis of alpha-ribazole-5'-phosphate from nicotinate mononucleotide (NAMN) and 5,6-dimethylbenzimidazole (DMB). This Pseudomonas putida (strain ATCC 47054 / DSM 6125 / CFBP 8728 / NCIMB 11950 / KT2440) protein is Nicotinate-nucleotide--dimethylbenzimidazole phosphoribosyltransferase.